We begin with the raw amino-acid sequence, 160 residues long: Transcription antitermination protein NusB (160 aa).

This sequence belongs to the NusB family.

Its function is as follows. Involved in transcription antitermination. Required for transcription of ribosomal RNA (rRNA) genes. Binds specifically to the boxA antiterminator sequence of the ribosomal RNA (rrn) operons. This chain is Transcription antitermination protein NusB, found in Sinorhizobium medicae (strain WSM419) (Ensifer medicae).